The chain runs to 349 residues: Protein-glutamate methylesterase/protein-glutamine glutaminase 1 (349 aa).

Residues 4–119 (RILVVDDSAV…KGFLEDSARR (116 aa)) enclose the Response regulatory domain. Asp-53 carries the 4-aspartylphosphate modification. The CheB-type methylesterase domain occupies 159–349 (PRAGRAELVV…VASAVLAWAR (191 aa)). Active-site residues include Ser-172, His-198, and Asp-293.

The protein belongs to the CheB family. In terms of processing, phosphorylated by CheA. Phosphorylation of the N-terminal regulatory domain activates the methylesterase activity.

Its subcellular location is the cytoplasm. It catalyses the reaction [protein]-L-glutamate 5-O-methyl ester + H2O = L-glutamyl-[protein] + methanol + H(+). The enzyme catalyses L-glutaminyl-[protein] + H2O = L-glutamyl-[protein] + NH4(+). In terms of biological role, involved in chemotaxis. Part of a chemotaxis signal transduction system that modulates chemotaxis in response to various stimuli. Catalyzes the demethylation of specific methylglutamate residues introduced into the chemoreceptors (methyl-accepting chemotaxis proteins or MCP) by CheR. Also mediates the irreversible deamidation of specific glutamine residues to glutamic acid. This Anaeromyxobacter dehalogenans (strain 2CP-C) protein is Protein-glutamate methylesterase/protein-glutamine glutaminase 1.